Reading from the N-terminus, the 39-residue chain is Mu-like prophage FluMu protein com (39 aa).

Belongs to the com family.

The sequence is that of Mu-like prophage FluMu protein com from Haemophilus influenzae (strain ATCC 51907 / DSM 11121 / KW20 / Rd).